The sequence spans 378 residues: MADIQLSKYHVSKDIGFLLEPLQDVLPDYFAPWNRLAKSLPDLVASHKFRDAVKEMPLLDSSKLAGYRQKRLAHLQLVLITSGYLWQEGEGGAVQRLPECVAKPLWNVSNDLGLKPVLTYGDVCLTNCRVKGGDIEVMYNLPGGAGTEWFLKVCGLVELTLGKGAQSVQNVLDGAKANDKAKMTSGLTELTTTIGNMQAALAKMNDNLTPDHFYNVLRPFLGGFGGPASPISGGLIYEGVSDAPVTMIGGSAAQSSAMQLLDNLLGVTHSPDKQAFLDEISNYMIPAHKQLLADLTKMPRKVPQIVAEAKDANLSKAYSGCVAALTQYRTYHIQVVTKYIVTASKSDSPKSLAYKDTGKSDLIPFLKEVRDDTEKMQK.

Residue alanine 2 is modified to Blocked amino end (Ala). Position 332 (histidine 332) interacts with heme.

The protein belongs to the indoleamine 2,3-dioxygenase family. In terms of assembly, homodimer. Requires heme as cofactor.

Functionally, serves a reserve supply of oxygen and facilitates the movement of oxygen within muscles. In Haliotis diversicolor (Abalone), this protein is Myoglobin.